The following is a 359-amino-acid chain: 3-dehydroquinate synthase (359 aa).

Residues 71–76 (DGEQYK), 105–109 (GVIGD), 129–130 (TT), Lys-142, Lys-151, and 169–172 (CLST) contribute to the NAD(+) site. Zn(2+) contacts are provided by Glu-184, His-247, and His-264.

This sequence belongs to the sugar phosphate cyclases superfamily. Dehydroquinate synthase family. Co(2+) is required as a cofactor. The cofactor is Zn(2+). Requires NAD(+) as cofactor.

It is found in the cytoplasm. The catalysed reaction is 7-phospho-2-dehydro-3-deoxy-D-arabino-heptonate = 3-dehydroquinate + phosphate. It functions in the pathway metabolic intermediate biosynthesis; chorismate biosynthesis; chorismate from D-erythrose 4-phosphate and phosphoenolpyruvate: step 2/7. In terms of biological role, catalyzes the conversion of 3-deoxy-D-arabino-heptulosonate 7-phosphate (DAHP) to dehydroquinate (DHQ). This Shewanella halifaxensis (strain HAW-EB4) protein is 3-dehydroquinate synthase.